We begin with the raw amino-acid sequence, 1345 residues long: Aldehyde oxidase 2 (1345 aa).

The 88-residue stretch at 9-96 (DDLEFFVNGR…GAAVTTVEGV (88 aa)) folds into the 2Fe-2S ferredoxin-type domain. [2Fe-2S] cluster-binding residues include C48, C53, C56, and C78. Q117 lines the Mo-molybdopterin pocket. Positions 118, 121, 153, and 155 each coordinate [2Fe-2S] cluster. C155 is a binding site for Mo-molybdopterin. The FAD-binding PCMH-type domain maps to 238-423 (FYGERITWIA…GSVYIPHSQK (186 aa)). Residues 266–273 (LISGNTAL), A347, S356, H360, D369, and L413 contribute to the FAD site. Mo-molybdopterin contacts are provided by residues 812 to 813 (GF), 1094 to 1097 (ASVG), Q1209, and L1274. E1276 (proton acceptor; for azaheterocycle hydroxylase activity) is an active-site residue.

It belongs to the xanthine dehydrogenase family. As to quaternary structure, homodimer. [2Fe-2S] cluster is required as a cofactor. It depends on FAD as a cofactor. The cofactor is Mo-molybdopterin. As to expression, expressed in olfactory mucosa epithelium (at protein level). Detected in skin.

The protein localises to the cytoplasm. It catalyses the reaction an aldehyde + O2 + H2O = a carboxylate + H2O2 + H(+). Functionally, oxidase with broad substrate specificity, oxidizing aromatic azaheterocycles, such as phthalazine, as well as aldehydes, such as benzaldehyde and retinal. Cannot use hypoxanthine as substrate. This is Aldehyde oxidase 2 (Aox2) from Mus musculus (Mouse).